Here is a 623-residue protein sequence, read N- to C-terminus: Negative regulator of PDR1-mediated fluconazole resistance JJJ1 (623 aa).

A J domain is found at 4 to 70; sequence CYYDLLEVRS…QERAWYDSHK (67 aa). Residues 363-387 form a C2H2-type zinc finger; it reads YDCFICKKSFKSEKQLENHIKTKLH. 3 disordered regions span residues 448 to 476, 499 to 581, and 599 to 623; these read QSSV…KLSN, GADN…NDAK, and SHIQ…KKNK. Residues 453–466 are compositionally biased toward acidic residues; sequence DSEDFTDDNNDTED. A compositionally biased stretch (polar residues) spans 499 to 508; that stretch reads GADNSETQNA. Over residues 525–538 the composition is skewed to basic and acidic residues; it reads ELTRILRELEESKT. Basic residues-rich tracts occupy residues 553-564 and 612-623; these read KKKTKAKKKKNK and KVKKGKRSKKNK.

Its subcellular location is the nucleus. Functionally, acts as a negative regulator of fluconazole resistance, primarily through down-regulation of the ABC transporter gene CDR1 via inactivation of the PDR1 transcriptional pathway. This is Negative regulator of PDR1-mediated fluconazole resistance JJJ1 from Candida glabrata (strain ATCC 2001 / BCRC 20586 / JCM 3761 / NBRC 0622 / NRRL Y-65 / CBS 138) (Yeast).